Consider the following 728-residue polypeptide: Methionine--tRNA ligase (728 aa).

The 'HIGH' region signature appears at 13–23 (PYANGSIHLGH). Cys144, Cys147, Cys157, and Cys160 together coordinate Zn(2+). The short motif at 348–352 (KMSKS) is the 'KMSKS' region element. Residue Lys351 participates in ATP binding. Residues 585-620 (LAPAKSQQVAQAVETMEKNSSTTPAPAKEGEAGQAS) form a disordered region. One can recognise a tRNA-binding domain in the interval 628-728 (DFGKIDLRVA…EGARPGMKVK (101 aa)).

This sequence belongs to the class-I aminoacyl-tRNA synthetase family. MetG type 1 subfamily. In terms of assembly, homodimer. It depends on Zn(2+) as a cofactor.

The protein resides in the cytoplasm. The enzyme catalyses tRNA(Met) + L-methionine + ATP = L-methionyl-tRNA(Met) + AMP + diphosphate. In terms of biological role, is required not only for elongation of protein synthesis but also for the initiation of all mRNA translation through initiator tRNA(fMet) aminoacylation. The chain is Methionine--tRNA ligase from Nitrosospira multiformis (strain ATCC 25196 / NCIMB 11849 / C 71).